The chain runs to 393 residues: 8-amino-7-oxononanoate synthase (393 aa).

Arginine 18 provides a ligand contact to substrate. 105–106 (GY) contributes to the pyridoxal 5'-phosphate binding site. Histidine 130 serves as a coordination point for substrate. 3 residues coordinate pyridoxal 5'-phosphate: serine 178, histidine 206, and threonine 234. An N6-(pyridoxal phosphate)lysine modification is found at lysine 237. Substrate is bound at residue threonine 353.

The protein belongs to the class-II pyridoxal-phosphate-dependent aminotransferase family. BioF subfamily. In terms of assembly, homodimer. Pyridoxal 5'-phosphate is required as a cofactor.

The enzyme catalyses 6-carboxyhexanoyl-[ACP] + L-alanine + H(+) = (8S)-8-amino-7-oxononanoate + holo-[ACP] + CO2. Its pathway is cofactor biosynthesis; biotin biosynthesis. Catalyzes the decarboxylative condensation of pimeloyl-[acyl-carrier protein] and L-alanine to produce 8-amino-7-oxononanoate (AON), [acyl-carrier protein], and carbon dioxide. The protein is 8-amino-7-oxononanoate synthase of Geotalea daltonii (strain DSM 22248 / JCM 15807 / FRC-32) (Geobacter daltonii).